The chain runs to 152 residues: 3-hydroxyacyl-[acyl-carrier-protein] dehydratase FabZ (152 aa).

H58 is a catalytic residue.

Belongs to the thioester dehydratase family. FabZ subfamily.

It is found in the cytoplasm. The enzyme catalyses a (3R)-hydroxyacyl-[ACP] = a (2E)-enoyl-[ACP] + H2O. Functionally, involved in unsaturated fatty acids biosynthesis. Catalyzes the dehydration of short chain beta-hydroxyacyl-ACPs and long chain saturated and unsaturated beta-hydroxyacyl-ACPs. The chain is 3-hydroxyacyl-[acyl-carrier-protein] dehydratase FabZ from Prochlorococcus marinus (strain MIT 9301).